Reading from the N-terminus, the 549-residue chain is Hydroxylamine reductase (549 aa).

[4Fe-4S] cluster-binding residues include Cys-5, Cys-8, Cys-17, and Cys-23. Hybrid [4Fe-2O-2S] cluster-binding residues include His-244, Glu-268, Cys-312, Cys-403, Cys-431, Cys-456, Glu-491, and Lys-493. Cys-403 is subject to Cysteine persulfide.

Belongs to the HCP family. [4Fe-4S] cluster is required as a cofactor. It depends on hybrid [4Fe-2O-2S] cluster as a cofactor.

The protein resides in the cytoplasm. The catalysed reaction is A + NH4(+) + H2O = hydroxylamine + AH2 + H(+). Its function is as follows. Catalyzes the reduction of hydroxylamine to form NH(3) and H(2)O. The chain is Hydroxylamine reductase from Caldanaerobacter subterraneus subsp. tengcongensis (strain DSM 15242 / JCM 11007 / NBRC 100824 / MB4) (Thermoanaerobacter tengcongensis).